Here is a 462-residue protein sequence, read N- to C-terminus: Argininosuccinate lyase (462 aa).

Belongs to the lyase 1 family. Argininosuccinate lyase subfamily.

The protein localises to the cytoplasm. It catalyses the reaction 2-(N(omega)-L-arginino)succinate = fumarate + L-arginine. It functions in the pathway amino-acid biosynthesis; L-arginine biosynthesis; L-arginine from L-ornithine and carbamoyl phosphate: step 3/3. This Xanthobacter autotrophicus (strain ATCC BAA-1158 / Py2) protein is Argininosuccinate lyase.